Reading from the N-terminus, the 146-residue chain is Leptin (146 aa).

A disulfide bond links Cys96 and Cys146.

This sequence belongs to the leptin family.

The protein localises to the secreted. Key player in the regulation of energy balance and body weight control. Once released into the circulation, has central and peripheral effects by binding LEPR, found in many tissues, which results in the activation of several major signaling pathways. In the hypothalamus, acts as an appetite-regulating factor that induces a decrease in food intake and an increase in energy consumption by inducing anorexinogenic factors and suppressing orexigenic neuropeptides, also regulates bone mass and secretion of hypothalamo-pituitary-adrenal hormones. In the periphery, increases basal metabolism, influences reproductive function, regulates pancreatic beta-cell function and insulin secretion, is pro-angiogenic for endothelial cell and affects innate and adaptive immunity. In the arcuate nucleus of the hypothalamus, activates by depolarization POMC neurons inducing FOS and SOCS3 expression to release anorexigenic peptides and inhibits by hyperpolarization NPY neurons inducing SOCS3 with a consequent reduction on release of orexigenic peptides. In addition to its known satiety inducing effect, has a modulatory role in nutrient absorption. In the intestine, reduces glucose absorption by enterocytes by activating PKC and leading to a sequential activation of p38, PI3K and ERK signaling pathways which exerts an inhibitory effect on glucose absorption. Acts as a growth factor on certain tissues, through the activation of different signaling pathways increases expression of genes involved in cell cycle regulation such as CCND1, via JAK2-STAT3 pathway, or VEGFA, via MAPK1/3 and PI3K-AKT1 pathways. May also play an apoptotic role via JAK2-STAT3 pathway and up-regulation of BIRC5 expression. Pro-angiogenic, has mitogenic activity on vascular endothelial cells and plays a role in matrix remodeling by regulating the expression of matrix metalloproteinases (MMPs) and tissue inhibitors of metalloproteinases (TIMPs). In innate immunity, modulates the activity and function of neutrophils by increasing chemotaxis and the secretion of oxygen radicals. Increases phagocytosis by macrophages and enhances secretion of pro-inflammatory mediators. Increases cytotoxic ability of NK cells. Plays a pro-inflammatory role, in synergy with IL1B, by inducing NOS2 which promotes the production of IL6, IL8 and Prostaglandin E2, through a signaling pathway that involves JAK2, PI3K, MAP2K1/MEK1 and MAPK14/p38. In adaptive immunity, promotes the switch of memory T-cells towards T helper-1 cell immune responses. Increases CD4(+)CD25(-) T-cell proliferation and reduces autophagy during TCR (T-cell receptor) stimulation, through MTOR signaling pathway activation and BCL2 up-regulation. The polypeptide is Leptin (LEP) (Pongo pygmaeus (Bornean orangutan)).